A 460-amino-acid polypeptide reads, in one-letter code: ATP synthase subunit beta 1 (460 aa).

149-156 is an ATP binding site; that stretch reads GGAGVGKT.

The protein belongs to the ATPase alpha/beta chains family. F-type ATPases have 2 components, CF(1) - the catalytic core - and CF(0) - the membrane proton channel. CF(1) has five subunits: alpha(3), beta(3), gamma(1), delta(1), epsilon(1). CF(0) has three main subunits: a(1), b(2) and c(9-12). The alpha and beta chains form an alternating ring which encloses part of the gamma chain. CF(1) is attached to CF(0) by a central stalk formed by the gamma and epsilon chains, while a peripheral stalk is formed by the delta and b chains.

The protein resides in the cell inner membrane. It catalyses the reaction ATP + H2O + 4 H(+)(in) = ADP + phosphate + 5 H(+)(out). Its function is as follows. Produces ATP from ADP in the presence of a proton gradient across the membrane. The catalytic sites are hosted primarily by the beta subunits. This is ATP synthase subunit beta 1 from Nitrosomonas eutropha (strain DSM 101675 / C91 / Nm57).